The primary structure comprises 1265 residues: Shugoshin 2 (1265 aa).

The stretch at 69 to 116 (KENSRRITTEKMLLQKEVEKLNFENTFLRLKLNNLNKKLIDIEALMNN) forms a coiled coil. Disordered regions lie at residues 161-202 (LTSN…STQD), 230-287 (DVPP…NLSA), 305-339 (LNCNNEINGHTNETNTEMQRNKQDLPGLSSESARE), and 381-447 (GIKK…GAED). The segment covering 190–202 (SSGSTTQPLSTQD) has biased composition (polar residues). Residues 232 to 242 (PPRESHSHSDQ) show a composition bias toward basic and acidic residues. The span at 305-322 (LNCNNEINGHTNETNTEM) shows a compositional bias: polar residues. 2 stretches are compositionally biased toward basic and acidic residues: residues 389–410 (KTNEHGMKTFRKVKDSSSEKKR) and 425–446 (IGEKIENRTERSDVLDGKRGAE). The stretch at 452–476 (FNNEQLAQMNEQLAQVNELKKMTLQ) forms a coiled coil. The disordered stretch occupies residues 499-526 (EQEETYSLSQSSGKFHQESKFDKGQNSL). The span at 503 to 512 (TYSLSQSSGK) shows a compositional bias: polar residues. Positions 603–626 (EQNESNINKLRKKVNRKTEIISGM) form a coiled coil. Residues 1073-1083 (NKMTSKSKKRK) show a composition bias toward basic residues. The disordered stretch occupies residues 1073-1093 (NKMTSKSKKRKTSIDPSPESH). A Phosphoserine modification is found at Ser-1144. The segment at 1200–1265 (KVNRRTQKSG…EPSLRDKMRR (66 aa)) is disordered. Residues 1217–1230 (DLSNTSFVSNNTAE) are compositionally biased toward polar residues. Residues 1231-1243 (SENKSEDLSSERT) show a composition bias toward basic and acidic residues.

It belongs to the shugoshin family. Part of an astrin (SPAG5) -kinastrin (SKAP) complex containing KNSTRN, SPAG5, PLK1, DYNLL1 and SGO2. Interacts with CDCA8. Directly interacts with PPP2CA.

It is found in the nucleus. The protein localises to the chromosome. It localises to the centromere. Its subcellular location is the kinetochore. In terms of biological role, cooperates with PPP2CA to protect centromeric cohesin from separase-mediated cleavage in oocytes specifically during meiosis I. Has a crucial role in protecting REC8 at centromeres from cleavage by separase. During meiosis, protects centromeric cohesion complexes until metaphase II/anaphase II transition, preventing premature release of meiosis-specific REC8 cohesin complexes from anaphase I centromeres. Is thus essential for an accurate gametogenesis. May act by targeting PPP2CA to centromeres, thus leading to cohesin dephosphorylation. Essential for recruiting KIF2C to the inner centromere and for correcting defective kinetochore attachments. Involved in centromeric enrichment of AUKRB in prometaphase. The protein is Shugoshin 2 of Homo sapiens (Human).